A 173-amino-acid chain; its full sequence is MSSNLPEFNYLSEYNSGNYFHLHESIYENAHINIYYKIKFDPITYLMLVDKINRIKETDMFYITYKTETANIFVAKLNYMIKLPIQVLCLESVFENPKDTKILRPEINNISLCKYKDNISVTINIDLTNFSKILDNIDHINSTINCTDNNNFLDIDGNHNDNNQFNKKKLCFL.

This is an uncharacterized protein from Acanthamoeba polyphaga (Amoeba).